A 450-amino-acid polypeptide reads, in one-letter code: Serine incorporator 2 (450 aa).

A run of 11 helical transmembrane segments spans residues 5-27 (LGAC…ILCG), 40-57 (LLFT…IIML), 96-118 (AVYR…MICV), 131-150 (GFWF…AFYI), 160-182 (FYFG…VDFA), 203-225 (AGLF…LMFV), 238-257 (VFIS…AVLP), 264-286 (PNSG…WSAL), 315-337 (VWWD…FISL), 380-402 (TYSY…MTLT), and 417-439 (WTSV…WTLV).

The protein belongs to the TDE1 family.

It is found in the cell membrane. It catalyses the reaction a 1,2-diacyl-sn-glycero-3-phospho-L-serine(in) = a 1,2-diacyl-sn-glycero-3-phospho-L-serine(out). It carries out the reaction a 1,2-diacyl-sn-glycero-3-phosphocholine(in) = a 1,2-diacyl-sn-glycero-3-phosphocholine(out). The enzyme catalyses a 1,2-diacyl-sn-glycero-3-phosphoethanolamine(in) = a 1,2-diacyl-sn-glycero-3-phosphoethanolamine(out). Non-ATP-dependent, non-specific lipid transporter for phosphatidylserine, phosphatidylcholine, and phosphatidylethanolamine. Functions as a scramblase that flips lipids in both directions across the membrane. In contrast to SERINC3 and SERINC5, has no effect on gammaretrovirus particles infectivity. This chain is Serine incorporator 2 (Serinc2), found in Mus musculus (Mouse).